The sequence spans 270 residues: Beta carbonic anhydrase 1 (270 aa).

Zn(2+) contacts are provided by C39, D41, H105, and C108.

It belongs to the beta-class carbonic anhydrase family. It depends on Zn(2+) as a cofactor.

It catalyses the reaction hydrogencarbonate + H(+) = CO2 + H2O. In terms of biological role, reversible hydration of carbon dioxide. The chain is Beta carbonic anhydrase 1 from Caenorhabditis briggsae.